Reading from the N-terminus, the 195-residue chain is Proteasome subunit beta 1 (195 aa).

Residues 1-6 constitute a propeptide, removed in mature form; by autocatalysis; the sequence is MEELPA. The active-site Nucleophile is the threonine 7.

The protein belongs to the peptidase T1B family. The 20S proteasome core is composed of 14 alpha and 14 beta subunits that assemble into four stacked heptameric rings, resulting in a barrel-shaped structure. The two inner rings, each composed of seven catalytic beta subunits, are sandwiched by two outer rings, each composed of seven alpha subunits. The catalytic chamber with the active sites is on the inside of the barrel. Has a gated structure, the ends of the cylinder being occluded by the N-termini of the alpha-subunits. Is capped at one or both ends by the proteasome regulatory ATPase, PAN.

It is found in the cytoplasm. It catalyses the reaction Cleavage of peptide bonds with very broad specificity.. The formation of the proteasomal ATPase PAN-20S proteasome complex, via the docking of the C-termini of PAN into the intersubunit pockets in the alpha-rings, triggers opening of the gate for substrate entry. Interconversion between the open-gate and close-gate conformations leads to a dynamic regulation of the 20S proteasome proteolysis activity. Its function is as follows. Component of the proteasome core, a large protease complex with broad specificity involved in protein degradation. The sequence is that of Proteasome subunit beta 1 from Sulfolobus acidocaldarius (strain ATCC 33909 / DSM 639 / JCM 8929 / NBRC 15157 / NCIMB 11770).